A 598-amino-acid chain; its full sequence is Thiol:disulfide interchange protein DsbD (598 aa).

The first 21 residues, 1–21 (MRALLTFFVAGLLVLSSPAMA), serve as a signal peptide directing secretion. Residues C130 and C136 are joined by a disulfide bond. The segment at 158–180 (TMPTQTASPLDTSTANTSTPQPL) is disordered. A compositionally biased stretch (polar residues) spans 159-180 (MPTQTASPLDTSTANTSTPQPL). 8 consecutive transmembrane segments (helical) span residues 198–220 (LLFL…YPIL), 240–262 (LVYV…SAGL), 274–296 (LIGL…TLQL), 324–346 (AISG…LYVA), 353–375 (TGGV…VAVF), 385–407 (GWMD…FLLE), 414–431 (WSTA…GWLY), and 446–468 (AVGI…YWFA). C212 and C333 are oxidised to a cystine. The 143-residue stretch at 456–598 (FASAQPALNY…FLEHIQRISN (143 aa)) folds into the Thioredoxin domain. C513 and C516 are oxidised to a cystine.

Belongs to the thioredoxin family. DsbD subfamily.

Its subcellular location is the cell inner membrane. The enzyme catalyses [protein]-dithiol + NAD(+) = [protein]-disulfide + NADH + H(+). It catalyses the reaction [protein]-dithiol + NADP(+) = [protein]-disulfide + NADPH + H(+). Functionally, required to facilitate the formation of correct disulfide bonds in some periplasmic proteins and for the assembly of the periplasmic c-type cytochromes. Acts by transferring electrons from cytoplasmic thioredoxin to the periplasm. This transfer involves a cascade of disulfide bond formation and reduction steps. In Vibrio vulnificus (strain YJ016), this protein is Thiol:disulfide interchange protein DsbD.